A 469-amino-acid polypeptide reads, in one-letter code: Argininosuccinate lyase (469 aa).

This sequence belongs to the lyase 1 family. Argininosuccinate lyase subfamily.

The protein localises to the cytoplasm. It carries out the reaction 2-(N(omega)-L-arginino)succinate = fumarate + L-arginine. Its pathway is amino-acid biosynthesis; L-arginine biosynthesis; L-arginine from L-ornithine and carbamoyl phosphate: step 3/3. The chain is Argininosuccinate lyase from Paracoccus denitrificans (strain Pd 1222).